Here is a 239-residue protein sequence, read N- to C-terminus: tRNA (guanine-N(7)-)-methyltransferase (239 aa).

Residues E69, E94, D121, and D144 each contribute to the S-adenosyl-L-methionine site. Residue D144 is part of the active site. A substrate-binding site is contributed by K148. An interaction with RNA region spans residues R150 to R155. Substrate-binding positions include D180 and T217–E220.

It belongs to the class I-like SAM-binding methyltransferase superfamily. TrmB family. As to quaternary structure, monomer.

The catalysed reaction is guanosine(46) in tRNA + S-adenosyl-L-methionine = N(7)-methylguanosine(46) in tRNA + S-adenosyl-L-homocysteine. Its pathway is tRNA modification; N(7)-methylguanine-tRNA biosynthesis. Functionally, catalyzes the formation of N(7)-methylguanine at position 46 (m7G46) in tRNA. The polypeptide is tRNA (guanine-N(7)-)-methyltransferase (Shigella boydii serotype 4 (strain Sb227)).